Here is a 441-residue protein sequence, read N- to C-terminus: Glutamyl-tRNA reductase (441 aa).

Substrate contacts are provided by residues 49–52 (TCNR), Ser110, 115–117 (EPQ), and Gln121. Cys50 functions as the Nucleophile in the catalytic mechanism. 190–195 (GAGEMA) contributes to the NADP(+) binding site.

This sequence belongs to the glutamyl-tRNA reductase family. Homodimer.

The enzyme catalyses (S)-4-amino-5-oxopentanoate + tRNA(Glu) + NADP(+) = L-glutamyl-tRNA(Glu) + NADPH + H(+). Its pathway is porphyrin-containing compound metabolism; protoporphyrin-IX biosynthesis; 5-aminolevulinate from L-glutamyl-tRNA(Glu): step 1/2. Catalyzes the NADPH-dependent reduction of glutamyl-tRNA(Glu) to glutamate 1-semialdehyde (GSA). This Sulfurihydrogenibium sp. (strain YO3AOP1) protein is Glutamyl-tRNA reductase.